The chain runs to 312 residues: Olfactory receptor 8G50 (312 aa).

Residues 1–28 (MAYSNQSRVTEFIISGLTNKPELQLPLF) lie on the Extracellular side of the membrane. N-linked (GlcNAc...) asparagine glycosylation occurs at N5. A helical membrane pass occupies residues 29–49 (LLFLGIYLFTVLGNLGMIILI). Residues 50–56 (LLSSHLH) lie on the Cytoplasmic side of the membrane. Residues 57–77 (TPMYFFLSSLSFIDLCYSTII) form a helical membrane-spanning segment. Topologically, residues 78-99 (TPKMLVNFVTTKNVISYQECMT) are extracellular. A disulfide bridge connects residues C97 and C189. A helical transmembrane segment spans residues 100–120 (QLYFFIAFVISECHMLAAMAY). Residues 121–143 (DRYVAICNPLLYNVTMSYQVCSW) lie on the Cytoplasmic side of the membrane. The helical transmembrane segment at 144–164 (MVGGVYGMGFIGAAIHTFCML) threads the bilayer. Residues 165–204 (RVVFCKDNIINHYFCDLFPLMELACSSTYVNEVVLLSLSA) lie on the Extracellular side of the membrane. A helical membrane pass occupies residues 205–225 (FNIFIPTLTILGSYIFIIISI). Over 226 to 244 (LRIKSTEGRFKAFSTCSSH) the chain is Cytoplasmic. Residues 245 to 265 (FSAVSVFFGSLAFMYLQPFSV) traverse the membrane as a helical segment. Over 266 to 274 (SSKDKGKVS) the chain is Extracellular. Residues 275–292 (SVFYTTIVPMLNPMIYSL) form a helical membrane-spanning segment. The Cytoplasmic portion of the chain corresponds to 293–312 (RNRDVKLALNKLFQKKKFHV).

This sequence belongs to the G-protein coupled receptor 1 family.

Its subcellular location is the cell membrane. Its function is as follows. Odorant receptor. This is Olfactory receptor 8G50 from Mus musculus (Mouse).